The sequence spans 206 residues: Glycerol-3-phosphate acyltransferase (206 aa).

6 helical membrane passes run 4 to 24 (TAFAFVLAAYLIGSLSFAVIV), 53 to 73 (LAAALTLLGDGAKGWVAVALA), 86 to 106 (GIALCALAVLFGHMWPVFFGF), 116 to 136 (VGILFGINPWLALAALATWLF), 137 to 157 (MAFVVKISSLSAIVACVLAPV), and 160 to 180 (FFILGPHSVYFGTCIIIAIVV).

The protein belongs to the PlsY family. Probably interacts with PlsX.

It is found in the cell inner membrane. It catalyses the reaction an acyl phosphate + sn-glycerol 3-phosphate = a 1-acyl-sn-glycero-3-phosphate + phosphate. It functions in the pathway lipid metabolism; phospholipid metabolism. Catalyzes the transfer of an acyl group from acyl-phosphate (acyl-PO(4)) to glycerol-3-phosphate (G3P) to form lysophosphatidic acid (LPA). This enzyme utilizes acyl-phosphate as fatty acyl donor, but not acyl-CoA or acyl-ACP. In Chromobacterium violaceum (strain ATCC 12472 / DSM 30191 / JCM 1249 / CCUG 213 / NBRC 12614 / NCIMB 9131 / NCTC 9757 / MK), this protein is Glycerol-3-phosphate acyltransferase.